The chain runs to 174 residues: Adipose-secreted signaling protein (174 aa).

It belongs to the ADISSP family.

The protein localises to the secreted. In terms of biological role, may be involved in thermogenesis and glucose homeostasis. The protein is Adipose-secreted signaling protein of Xenopus tropicalis (Western clawed frog).